A 780-amino-acid polypeptide reads, in one-letter code: Subtilisin-like protease SBT5.1 (780 aa).

Residues 1-25 (MMRCLTITIMFFMFFFLSVIQKCKS) form the signal peptide. The propeptide at 26–106 (ETSKSGDYII…VFPDQMLQLH (81 aa)) is activation peptide. The 74-residue stretch at 33–106 (YIIYMGAASS…VFPDQMLQLH (74 aa)) folds into the Inhibitor I9 domain. The Peptidase S8 domain maps to 110 to 617 (SWDFLVQESY…AGQVTIFGPS (508 aa)). The active-site Charge relay system is Asp147. An N-linked (GlcNAc...) asparagine glycan is attached at Asn197. Residue His215 is the Charge relay system of the active site. Asn230 carries an N-linked (GlcNAc...) asparagine glycan. Positions 385-469 (IDANEEAARN…PEDGIQIMSY (85 aa)) constitute a PA domain. A glycan (N-linked (GlcNAc...) asparagine) is linked at Asn471. The Charge relay system role is filled by Ser550. An N-linked (GlcNAc...) asparagine glycan is attached at Asn776.

This sequence belongs to the peptidase S8 family.

Its subcellular location is the secreted. This Arabidopsis thaliana (Mouse-ear cress) protein is Subtilisin-like protease SBT5.1.